Here is a 510-residue protein sequence, read N- to C-terminus: Lysine--tRNA ligase (510 aa).

Positions 420 and 427 each coordinate Mg(2+).

This sequence belongs to the class-II aminoacyl-tRNA synthetase family. As to quaternary structure, homodimer. The cofactor is Mg(2+).

The protein resides in the cytoplasm. It catalyses the reaction tRNA(Lys) + L-lysine + ATP = L-lysyl-tRNA(Lys) + AMP + diphosphate. The sequence is that of Lysine--tRNA ligase from Vibrio campbellii (strain ATCC BAA-1116).